A 410-amino-acid polypeptide reads, in one-letter code: Ribose 1,5-bisphosphate phosphokinase PhnN (410 aa).

A unknown region spans residues 1–220 (MRYAVYLAPP…VWLLMAGSTS (220 aa)). Residues 221–410 (MRTETGQLIY…SHCHQPITAL (190 aa)) form a ribose 1,5-bisphosphokinase region. An ATP-binding site is contributed by 233–240 (GPSGAGKD).

In the C-terminal section; belongs to the ribose 1,5-bisphosphokinase family.

It catalyses the reaction alpha-D-ribose 1,5-bisphosphate + ATP = 5-phospho-alpha-D-ribose 1-diphosphate + ADP. The protein operates within metabolic intermediate biosynthesis; 5-phospho-alpha-D-ribose 1-diphosphate biosynthesis; 5-phospho-alpha-D-ribose 1-diphosphate from D-ribose 5-phosphate (route II): step 3/3. Its function is as follows. Catalyzes the phosphorylation of ribose 1,5-bisphosphate to 5-phospho-D-ribosyl alpha-1-diphosphate (PRPP). The chain is Ribose 1,5-bisphosphate phosphokinase PhnN (phnN) from Laribacter hongkongensis (strain HLHK9).